A 381-amino-acid chain; its full sequence is Penicillin-binding protein 4 (381 aa).

S60 serves as the catalytic Acyl-ester intermediate. A helical membrane pass occupies residues 271–291 (VAGCLDTWSFMATGWGHGWAL). 299 to 308 (GYGHDGASGG) lines the NAD(+) pocket. A helical membrane pass occupies residues 315-340 (VVPGSGVVAALLTNGGVATSFFTDLF).

The protein belongs to the beta-lactamase family.

Its subcellular location is the cell membrane. Involved in cell wall biosynthesis and may also act as a sensor of external penicillins. In Amycolatopsis lactamdurans (Nocardia lactamdurans), this protein is Penicillin-binding protein 4 (pbp).